The primary structure comprises 215 residues: Adenylate kinase (215 aa).

10-15 (GSGKGT) serves as a coordination point for ATP. Residues 30 to 59 (STGDLFRTNIENDTPLGKEIKQIVENGQLV) are NMP. AMP is bound by residues Thr31, Arg36, 57-59 (QLV), 85-88 (GFPR), and Gln92. The LID stretch occupies residues 121–158 (GRRICQSCCKIFNIYTLPTKEKEICDFCQGILYQRKDD). Arg122 serves as a coordination point for ATP. Cys125 and Cys128 together coordinate Zn(2+). 131-132 (IF) contributes to the ATP binding site. 2 residues coordinate Zn(2+): Cys145 and Cys148. AMP contacts are provided by Arg155 and Arg166. Lys194 contacts ATP.

This sequence belongs to the adenylate kinase family. In terms of assembly, monomer.

It localises to the cytoplasm. The catalysed reaction is AMP + ATP = 2 ADP. It functions in the pathway purine metabolism; AMP biosynthesis via salvage pathway; AMP from ADP: step 1/1. Catalyzes the reversible transfer of the terminal phosphate group between ATP and AMP. Plays an important role in cellular energy homeostasis and in adenine nucleotide metabolism. This Borrelia recurrentis (strain A1) protein is Adenylate kinase.